Reading from the N-terminus, the 686-residue chain is Gamma-aminobutyric acid receptor alpha-like (686 aa).

Residues 1-58 form the signal peptide; it reads MCTMPATRDASGSGDASTDLIAARSLSSHQGQRSNLRIFKLLISCCLLMLCIYPNAWP. Residues 97 to 393 are Extracellular-facing; the sequence is SSWLTQSNNH…NFHLQRHMGN (297 aa). A glycan (N-linked (GlcNAc...) asparagine) is linked at N108. A disulfide bridge connects residues C233 and C247. N292 is a glycosylation site (N-linked (GlcNAc...) asparagine). Transmembrane regions (helical) follow at residues 394–414, 424–441, and 456–476; these read FLIQVYGPCCLLVVLSWVSFW, VSLGITTVLTMTFLGLEA, and FFVFLSFGFIFATILQFAVVH. Over 477 to 650 the chain is Cytoplasmic; the sequence is YYTKYGSGEC…YNSVSKIDRA (174 aa). The disordered stretch occupies residues 570–641; the sequence is KPPRADSDED…RRKGKRTPQY (72 aa). Over residues 586-596 the composition is skewed to polar residues; it reads QLRANEAPTTS. Over residues 597-609 the composition is skewed to low complexity; that stretch reads AAAAAAQAAAQAA. Residues 651–671 traverse the membrane as a helical segment; sequence SRIVFPLLFILINVFYWYGYL.

This sequence belongs to the ligand-gated ion channel (TC 1.A.9) family. Gamma-aminobutyric acid receptor (TC 1.A.9.5) subfamily. As to quaternary structure, generally pentameric. There are five types of GABA(A) receptor chains: alpha, beta, gamma, delta, and rho. Interacts with Lcch3 (beta chain).

Its subcellular location is the postsynaptic cell membrane. The protein resides in the cell membrane. GABA, an inhibitory neurotransmitter, mediates neuronal inhibition by binding to the GABA receptor and opening an integral chloride channel. May combine with the ligand-gated ion channel subunit Lcch3 to form cation-selective GABA-gated ion channels. The polypeptide is Gamma-aminobutyric acid receptor alpha-like (Grd) (Drosophila melanogaster (Fruit fly)).